The chain runs to 436 residues: Protein translocase subunit SecY (436 aa).

10 consecutive transmembrane segments (helical) span residues Ile-19 to Gly-39, Phe-68 to Leu-88, Tyr-116 to Leu-136, Leu-151 to Ile-171, Gly-179 to Ile-199, Ile-216 to Val-236, Val-269 to Leu-289, Gly-313 to Ile-333, Val-372 to Gly-392, and Asp-395 to Met-415.

This sequence belongs to the SecY/SEC61-alpha family. Component of the Sec protein translocase complex. Heterotrimer consisting of SecY, SecE and SecG subunits. The heterotrimers can form oligomers, although 1 heterotrimer is thought to be able to translocate proteins. Interacts with the ribosome. Interacts with SecDF, and other proteins may be involved. Interacts with SecA.

The protein resides in the cell membrane. The central subunit of the protein translocation channel SecYEG. Consists of two halves formed by TMs 1-5 and 6-10. These two domains form a lateral gate at the front which open onto the bilayer between TMs 2 and 7, and are clamped together by SecE at the back. The channel is closed by both a pore ring composed of hydrophobic SecY resides and a short helix (helix 2A) on the extracellular side of the membrane which forms a plug. The plug probably moves laterally to allow the channel to open. The ring and the pore may move independently. The sequence is that of Protein translocase subunit SecY from Streptococcus gordonii (strain Challis / ATCC 35105 / BCRC 15272 / CH1 / DL1 / V288).